We begin with the raw amino-acid sequence, 288 residues long: Glucose-1-phosphate thymidylyltransferase (288 aa).

Mg(2+)-binding residues include D108 and D223.

This sequence belongs to the glucose-1-phosphate thymidylyltransferase family. As to quaternary structure, homotetramer. Requires Mg(2+) as cofactor.

The enzyme catalyses dTTP + alpha-D-glucose 1-phosphate + H(+) = dTDP-alpha-D-glucose + diphosphate. Its function is as follows. Catalyzes the formation of dTDP-glucose, from dTTP and glucose 1-phosphate, as well as its pyrophosphorolysis. This is Glucose-1-phosphate thymidylyltransferase (rmlA) from Neisseria gonorrhoeae.